Reading from the N-terminus, the 432-residue chain is Adenylosuccinate synthetase (432 aa).

GTP-binding positions include 13 to 19 (GDEGKGK) and 41 to 43 (GHT). Asp14 functions as the Proton acceptor in the catalytic mechanism. Positions 14 and 41 each coordinate Mg(2+). Residues 14 to 17 (DEGK), 39 to 42 (NAGH), Thr130, Arg144, Gln225, Thr240, and Arg304 each bind IMP. Residue His42 is the Proton donor of the active site. 300 to 306 (ATTGRPR) is a substrate binding site. GTP-binding positions include Arg306, 332–334 (KLD), and 415–417 (STG).

The protein belongs to the adenylosuccinate synthetase family. As to quaternary structure, homodimer. It depends on Mg(2+) as a cofactor.

The protein localises to the cytoplasm. It carries out the reaction IMP + L-aspartate + GTP = N(6)-(1,2-dicarboxyethyl)-AMP + GDP + phosphate + 2 H(+). It functions in the pathway purine metabolism; AMP biosynthesis via de novo pathway; AMP from IMP: step 1/2. Plays an important role in the de novo pathway of purine nucleotide biosynthesis. Catalyzes the first committed step in the biosynthesis of AMP from IMP. The polypeptide is Adenylosuccinate synthetase (Hahella chejuensis (strain KCTC 2396)).